The chain runs to 3595 residues: Replicase polyprotein 1ab (3595 aa).

Residues Cys-3–Cys-23 form a C4-type; atypical zinc finger. Residues Ser-56–Gly-164 form the Peptidase C31 domain. Active-site for Nsp1-alpha papain-like cysteine proteinase activity residues include Cys-63 and His-130. Positions Leu-239–Gly-350 constitute a Peptidase C32 domain. Active-site for Nsp1-beta papain-like cysteine proteinase activity residues include Cys-246 and His-309. Catalysis depends on for Nsp2 cysteine proteinase activity residues Cys-378 and His-430. Residues Arg-482–Lys-527 are disordered. Positions Lys-511 to Ala-520 are enriched in basic and acidic residues. A Peptidase C33 domain is found at Thr-633–Glu-736. Residues Gln-808–Pro-862 are disordered. Residues Asp-851–Arg-860 are compositionally biased toward basic and acidic residues. 7 helical membrane passes run Met-922 to Ile-942, Ile-951 to Ser-971, Val-1019 to Val-1039, Ile-1239 to Val-1259, Pro-1316 to Ile-1336, Ala-1345 to Ala-1365, and Ala-1381 to Leu-1401. The interval Met-922 to Val-1039 is HD1. An HD2 region spans residues Ile-1239–Trp-1399. Residues Gly-1464–Glu-1664 form the Peptidase S32 domain. Active-site charge relay system; for 3C-like serine proteinase activity residues include His-1502, Asp-1527, and Ser-1580. A run of 4 helical transmembrane segments spans residues Ile-1673–Val-1693, Tyr-1711–Ile-1731, Ala-1744–Gly-1764, and Ala-1784–Phe-1804. The interval Leu-1687–Phe-1804 is HD3. One can recognise a NiRAN domain in the interval Asp-2083–Gly-2253. The RdRp catalytic domain maps to Gly-2491–Phe-2625. The AV ZBD domain maps to Gly-2746 to Phe-2812. Positions 2752, 2755, 2765, 2770, 2773, 2777, 2779, 2782, 2789, 2791, 2798, and 2801 each coordinate Zn(2+). The (+)RNA virus helicase ATP-binding domain occupies Asp-2862–Leu-3022. Gly-2897–Thr-2904 lines the ATP pocket. In terms of domain architecture, (+)RNA virus helicase C-terminal spans His-3023–Asp-3157. The AV-Nsp11N/CoV-Nsp15M domain occupies Ser-3196–Val-3292. The 123-residue stretch at Met-3294 to Phe-3416 folds into the NendoU domain. Residues His-3325, His-3340, and Lys-3369 contribute to the active site.

Belongs to the arteriviridae polyprotein family. In terms of processing, specific enzymatic cleavages in vivo by its own proteases yield mature proteins. There are two alternative pathways for processing. Either nsp4-5 is cleaved, which represents the major pathway or the nsp5-6 and nsp6-7 are processed, which represents the minor pathway. The major pathway occurs when nsp2 acts as a cofactor for nsp4.

The protein localises to the host membrane. Its subcellular location is the host cytoplasm. It localises to the host perinuclear region. It carries out the reaction RNA(n) + a ribonucleoside 5'-triphosphate = RNA(n+1) + diphosphate. The catalysed reaction is ATP + H2O = ADP + phosphate + H(+). The enzyme catalyses uridylyl-uridylyl-ribonucleotide-RNA = a 3'-end uridylyl-2',3'-cyclophospho-uridine-RNA + a 5'-end dephospho-ribonucleoside-RNA. Its function is as follows. The replicase polyprotein 1ab is a multifunctional protein: it contains the activities necessary for the transcription of negative stranded RNA, leader RNA, subgenomic mRNAs and progeny virion RNA as well as proteinases responsible for the cleavage of the polyprotein into functional products. Functionally, the Nsp1 chain is essential for viral subgenomic mRNA synthesis. The 3C-like serine proteinase chain is responsible for the majority of cleavages as it cleaves the C-terminus of the polyprotein. In terms of biological role, plays a role in viral transcription/replication and prevents the simultaneous activation of host cell dsRNA sensors, such as MDA5/IFIH1, OAS, and PKR. Acts by degrading the 5'-polyuridines generated during replication of the poly(A) region of viral genomic and subgenomic RNAs. Catalyzes a two-step reaction in which a 2'3'-cyclic phosphate (2'3'-cP) is first generated by 2'-O transesterification, which is then hydrolyzed to a 3'-phosphate (3'-P). If not degraded, poly(U) RNA would hybridize with poly(A) RNA tails and activate host dsRNA sensors. Its function is as follows. The helicase chain, which contains a zinc finger structure, displays RNA and DNA duplex-unwinding activities with 5' to 3' polarity. The protein is Replicase polyprotein 1ab (rep) of Simian hemorrhagic fever virus (SHFV).